Consider the following 154-residue polypeptide: UPF0225 protein YPTB2098 (154 aa).

This sequence belongs to the UPF0225 family.

This chain is UPF0225 protein YPTB2098, found in Yersinia pseudotuberculosis serotype I (strain IP32953).